The following is a 147-amino-acid chain: Fluoride-specific ion channel FluC 1 (147 aa).

The next 4 membrane-spanning stretches (helical) occupy residues 29–49 (YVYI…ISFL), 61–81 (IANL…IAFF), 90–110 (AITT…LELI), and 118–138 (FITL…LCYV). 2 residues coordinate Na(+): Gly97 and Thr100.

Belongs to the fluoride channel Fluc/FEX (TC 1.A.43) family.

It is found in the cell membrane. The catalysed reaction is fluoride(in) = fluoride(out). Its activity is regulated as follows. Na(+) is not transported, but it plays an essential structural role and its presence is essential for fluoride channel function. In terms of biological role, fluoride-specific ion channel. Important for reducing fluoride concentration in the cell, thus reducing its toxicity. This chain is Fluoride-specific ion channel FluC 1, found in Staphylococcus aureus (strain Mu50 / ATCC 700699).